We begin with the raw amino-acid sequence, 657 residues long: tRNA 5-methylaminomethyl-2-thiouridine biosynthesis bifunctional protein MnmC (657 aa).

Positions 1–239 are tRNA (mnm(5)s(2)U34)-methyltransferase; that stretch reads MTDRIVPATL…KRAMLVGEFA (239 aa). The FAD-dependent cmnm(5)s(2)U34 oxidoreductase stretch occupies residues 263 to 657; that stretch reads IGAGLAGCAV…VRALRHGRVA (395 aa).

This sequence in the N-terminal section; belongs to the methyltransferase superfamily. tRNA (mnm(5)s(2)U34)-methyltransferase family. The protein in the C-terminal section; belongs to the DAO family. FAD serves as cofactor.

The protein localises to the cytoplasm. It catalyses the reaction 5-aminomethyl-2-thiouridine(34) in tRNA + S-adenosyl-L-methionine = 5-methylaminomethyl-2-thiouridine(34) in tRNA + S-adenosyl-L-homocysteine + H(+). Functionally, catalyzes the last two steps in the biosynthesis of 5-methylaminomethyl-2-thiouridine (mnm(5)s(2)U) at the wobble position (U34) in tRNA. Catalyzes the FAD-dependent demodification of cmnm(5)s(2)U34 to nm(5)s(2)U34, followed by the transfer of a methyl group from S-adenosyl-L-methionine to nm(5)s(2)U34, to form mnm(5)s(2)U34. The sequence is that of tRNA 5-methylaminomethyl-2-thiouridine biosynthesis bifunctional protein MnmC from Burkholderia pseudomallei (strain 668).